A 448-amino-acid chain; its full sequence is Zinc finger and BTB domain-containing protein 14 (448 aa).

Residues 36 to 102 (CDIAIVVEDV…MYTAKISVKK (67 aa)) enclose the BTB domain. The Nuclear localization signal signature appears at 50–66 (HRCVLAACSTYFKKLFK). The segment at 130-193 (VSSPEENTQS…QEDGKSPTTT (64 aa)) is disordered. Residues 156-167 (DTQDDEVEEIGD) are compositionally biased toward acidic residues. 5 C2H2-type zinc fingers span residues 275–302 (IVCQACGKTFSDEARLRKHEKLHTADRP), 303–330 (FVCEMCTKGFTTQAHLKEHLKIHTGYKP), 331–358 (YSCEVCGKSFIRAPDLKKHERVHSNERP), 359–386 (FACHMCDKAFKHKSHLKDHERRHRGEKP), and 387–415 (FVCGSCTKAFAKASDLKRHENNMHSERKQ). The span at 404–415 (RHENNMHSERKQ) shows a compositional bias: basic and acidic residues. Residues 404-425 (RHENNMHSERKQVTTANSIQSE) form a disordered region. Positions 416 to 425 (VTTANSIQSE) are enriched in polar residues.

It belongs to the krueppel C2H2-type zinc-finger protein family. As to quaternary structure, interacts with ZBTB21.

The protein resides in the nucleus. Transcriptional activator of the dopamine transporter (DAT), binding it's promoter at the consensus sequence 5'-CCTGCACAGTTCACGGA-3'. Binds to 5'-d(GCC)(n)-3' trinucleotide repeats in promoter regions and acts as a repressor of the FMR1 gene. Transcriptional repressor of MYC and thymidine kinase promoters. The sequence is that of Zinc finger and BTB domain-containing protein 14 (ZBTB14) from Gallus gallus (Chicken).